The chain runs to 114 residues: Integration host factor subunit alpha (114 aa).

Belongs to the bacterial histone-like protein family. Heterodimer of an alpha and a beta chain.

In terms of biological role, this protein is one of the two subunits of integration host factor, a specific DNA-binding protein that functions in genetic recombination as well as in transcriptional and translational control. This Afipia carboxidovorans (strain ATCC 49405 / DSM 1227 / KCTC 32145 / OM5) (Oligotropha carboxidovorans) protein is Integration host factor subunit alpha.